A 1039-amino-acid polypeptide reads, in one-letter code: Beta-galactosidase (1039 aa).

Substrate-binding residues include Asn-103 and Asp-201. Asp-201 is a binding site for Na(+). Glu-415, His-417, and Glu-460 together coordinate Mg(2+). Substrate contacts are provided by residues Glu-460 and 536–539; that span reads EYAH. Residue Glu-460 is the Proton donor of the active site. The active-site Nucleophile is Glu-536. Asn-596 lines the Mg(2+) pocket. Positions 600 and 603 each coordinate Na(+). Positions 603 and 1012 each coordinate substrate.

It belongs to the glycosyl hydrolase 2 family. Homotetramer. The cofactor is Mg(2+). Na(+) is required as a cofactor.

The enzyme catalyses Hydrolysis of terminal non-reducing beta-D-galactose residues in beta-D-galactosides.. With respect to regulation, inhibited by zinc, copper and nickel ions. Activated by 2-mercaptoethanol and inhibited by EDTA in vitro. The protein is Beta-galactosidase (lacZ) of Pseudoalteromonas haloplanktis (Alteromonas haloplanktis).